The chain runs to 723 residues: Calpastatin (723 aa).

Disordered regions lie at residues Met-1–Cys-402 and Ser-422–Leu-509. Over residues Pro-21–Ala-30 the composition is skewed to basic residues. Lys-32 participates in a covalent cross-link: Glycyl lysine isopeptide (Lys-Gly) (interchain with G-Cter in SUMO2). The segment covering Val-46–Val-84 has biased composition (basic and acidic residues). An N6-acetyllysine modification is found at Lys-50. Low complexity-rich tracts occupy residues Ser-85–Glu-94 and Ser-113–Glu-125. At Ser-87 the chain carries Phosphoserine. A Phosphothreonine modification is found at Thr-137. The span at Thr-157 to Lys-173 shows a compositional bias: acidic residues. Residues Glu-171 to Ser-224 form an Inhibitory domain 1 repeat. The span at Glu-195–Gly-216 shows a compositional bias: basic and acidic residues. Ser-224 and Ser-245 each carry phosphoserine. 2 stretches are compositionally biased toward basic and acidic residues: residues Asp-249 to Leu-263 and Pro-306 to Ser-367. An Inhibitory domain 2 repeat occupies Arg-307–Ala-359. A phosphoserine mark is found at Ser-367, Ser-369, and Ser-376. Residues Asp-378–Arg-396 show a composition bias toward basic and acidic residues. Ser-443 is modified (phosphoserine). Positions Gly-445 to Glu-504 are enriched in basic and acidic residues. One copy of the Inhibitory domain 3 repeat lies at Ala-449–Val-502. 2 positions are modified to phosphoserine: Ser-519 and Ser-530. The tract at residues Ser-547–Ser-723 is disordered. A compositionally biased stretch (low complexity) spans Gln-548–Pro-560. Over residues Asp-562–Asp-571 the composition is skewed to basic and acidic residues. A phosphoserine mark is found at Ser-578 and Ser-580. An Inhibitory domain 4 repeat occupies Pro-586 to Pro-642. Positions Pro-586 to Arg-643 are enriched in basic and acidic residues. Over residues Asn-653–Ala-670 the composition is skewed to polar residues. Residues Pro-672–Leu-690 are compositionally biased toward low complexity. Residues Lys-701–Ser-723 are compositionally biased toward basic and acidic residues.

This sequence belongs to the protease inhibitor I27 (calpastatin) family.

Its function is as follows. Specific inhibition of calpain (calcium-dependent cysteine protease). Plays a key role in postmortem tenderization of meat and have been proposed to be involved in muscle protein degradation in living tissue. The protein is Calpastatin (CAST) of Ovis aries (Sheep).